A 113-amino-acid chain; its full sequence is Protein AV2 (113 aa).

Residues 94–113 form a disordered region; that stretch reads SKTGLGEQAHVQKAHDVQDV.

It belongs to the geminiviridae protein AV2/V2 family. Interacts with host SGS3.

It localises to the host cytoplasm. The protein resides in the host perinuclear region. In terms of biological role, through its interaction with host SGS3, acts as a suppressor of RNA-mediated gene silencing, also known as post-transcriptional gene silencing (PTGS), a mechanism of plant viral defense that limits the accumulation of viral RNAs. The chain is Protein AV2 from African cassava mosaic virus (isolate West Kenyan 844) (ACMV).